The following is an 841-amino-acid chain: Nuclear RNA export factor 2 (841 aa).

The interval 1–285 is RNA-binding unit probably involved in Piwi-dependent recruitment and single-stranded RNA-PPNP complex formation; that stretch reads MPNQMRVLDF…NFELVDGKPF (285 aa). LRR repeat units follow at residues 200-221, 224-245, and 249-270; these read RLNGFILSNNRIRDIRPLTLLA, DYALLDLRGNKIKSAERLCRAL, and RARELLLENNPIVKISNFPANI. The interval 286 to 553 is necessary for silencing function; the sequence is NMLHKIFSPL…EYVRAVKEVF (268 aa). The RRM domain occupies 325–408; that stretch reads WHAFMIPDPS…IFRYYLRMNV (84 aa). 3 LRR repeats span residues 475 to 496, 500 to 521, and 524 to 545; these read TCSEIRLCHNKVLVLDGAHVLG, CLRAVDLSHNWVQDLSSIHSLG, and PLKSLVLHGNKLCRNYRLPSEY. In terms of domain architecture, NTF2 spans 585-758; it reads LVGAFLENYL…LKIANERLHI (174 aa). The TAP-C domain maps to 788 to 841; that stretch reads DVKDHKLLLFQEVTGLISTWVTSIVEEADWDFERALKLFIQKNADHEIPDLAFA.

Belongs to the NXF family. In the ovaries, part of a complex composed of at least Panx, nxf2, piwi and Nxt1. The complex is knowns as Panx-induced cotranscriptional silencing (PICTS) complex, Panx-nxf2-dependent TAP/p15 silencing (Pandas complex), SFiNX (silencing factor interacting nuclear export variant) or piwi-Panx-nxf2-p15 (PPNP) complex. Interacts (via TAP-C domain) with Panx (via NIR region); the interaction is direct. Interacts (via NTF2 domain) with Nxt1; the interaction is direct and prevents Nxt1 binding to nucleoporins. Interacts with sbr/Nxf1. As to expression, expressed in female gonads (at protein level). Expressed ubiquitously.

It localises to the cytoplasm. The protein localises to the nucleus. The protein resides in the nucleoplasm. May be involved in the export of mRNA from the nucleus to the cytoplasm. In the ovaries, forms a complex with nxf2, piwi and Nxt1 which acts as effectors of cotranscriptional transposon silencing. On recruitment to a target transcript, interacts with single stranded RNA, thereby anchoring the complex via the nascent target transcript to chromatin and allowing Panx to recruit silencing effectors to establishing repressive heterochromatin at transposon loci. Does not affect piRNA biogenesis. The interaction with Panx stabilizes the nuclear protein complex. Does not bind nucleoporins, but regulates sbr/Nxf1 binding to nucleoporins and, indirectly, transposon exports. The polypeptide is Nuclear RNA export factor 2 (nxf2) (Drosophila melanogaster (Fruit fly)).